The sequence spans 240 residues: Homeobox protein DLX-4 (240 aa).

Disordered stretches follow at residues 44–70 (DLSY…DSYL) and 175–194 (LKQS…PSLS). Positions 116–175 (LRKPRTIYSSLQLQHLNQRFQHTQYLALPERAQLAAQLGLTQTQVKIWFQNKRSKYKKLL) form a DNA-binding region, homeobox.

It belongs to the distal-less homeobox family. Branchial arches, molar and incisor teeth and limbs.

It localises to the nucleus. In terms of biological role, may play a role in determining the production of hemoglobin S. May act as a repressor. During embryonic development, plays a role in palatogenesis. In Mus musculus (Mouse), this protein is Homeobox protein DLX-4 (Dlx4).